A 235-amino-acid polypeptide reads, in one-letter code: Thiamine import ATP-binding protein ThiQ (235 aa).

Residues 2-230 form the ABC transporter domain; that stretch reads LKLIDITWLY…QASASALLGI (229 aa). 32–39 lines the ATP pocket; sequence GPSGAGKS.

It belongs to the ABC transporter superfamily. Thiamine importer (TC 3.A.1.19.1) family. As to quaternary structure, the complex is composed of two ATP-binding proteins (ThiQ), two transmembrane proteins (ThiP) and a solute-binding protein (ThiB).

The protein resides in the cell inner membrane. The catalysed reaction is thiamine(out) + ATP + H2O = thiamine(in) + ADP + phosphate + H(+). Its function is as follows. Part of the ABC transporter complex ThiBPQ involved in thiamine import. Responsible for energy coupling to the transport system. The polypeptide is Thiamine import ATP-binding protein ThiQ (Salmonella paratyphi A (strain ATCC 9150 / SARB42)).